Consider the following 506-residue polypeptide: Apolipoprotein N-acyltransferase (506 aa).

The next 7 helical transmembrane spans lie at 10-30 (ANAK…AGWG), 33-53 (LALP…PLWW), 57-77 (VLAP…FYGS), 105-125 (IWLC…LLMA), 139-159 (WGVT…LWWI), 176-196 (LAGP…VTLS), and 205-225 (VGLA…SVRV). In terms of domain architecture, CN hydrolase spans 238–473 (IQGNIPTREK…FVIYAATIFR (236 aa)). Glu-279 serves as the catalytic Proton acceptor. Residue Lys-336 is part of the active site. The active-site Nucleophile is the Cys-385. A helical transmembrane segment spans residues 483 to 500 (YGDWLLPLLLGMLSLSVL).

Belongs to the CN hydrolase family. Apolipoprotein N-acyltransferase subfamily.

Its subcellular location is the cell inner membrane. The catalysed reaction is N-terminal S-1,2-diacyl-sn-glyceryl-L-cysteinyl-[lipoprotein] + a glycerophospholipid = N-acyl-S-1,2-diacyl-sn-glyceryl-L-cysteinyl-[lipoprotein] + a 2-acyl-sn-glycero-3-phospholipid + H(+). It participates in protein modification; lipoprotein biosynthesis (N-acyl transfer). Catalyzes the phospholipid dependent N-acylation of the N-terminal cysteine of apolipoprotein, the last step in lipoprotein maturation. This is Apolipoprotein N-acyltransferase from Thermosynechococcus vestitus (strain NIES-2133 / IAM M-273 / BP-1).